A 288-amino-acid polypeptide reads, in one-letter code: Diaminopimelate epimerase (288 aa).

Substrate-binding residues include Asn13, Gln51, and Asn71. Cys80 acts as the Proton donor in catalysis. Residues 81-82 (GN), Asn166, Asn200, and 218-219 (ER) contribute to the substrate site. Cys227 (proton acceptor) is an active-site residue. 228-229 (GT) contributes to the substrate binding site.

It belongs to the diaminopimelate epimerase family. As to quaternary structure, homodimer.

The protein resides in the cytoplasm. It carries out the reaction (2S,6S)-2,6-diaminopimelate = meso-2,6-diaminopimelate. Its pathway is amino-acid biosynthesis; L-lysine biosynthesis via DAP pathway; DL-2,6-diaminopimelate from LL-2,6-diaminopimelate: step 1/1. Catalyzes the stereoinversion of LL-2,6-diaminopimelate (L,L-DAP) to meso-diaminopimelate (meso-DAP), a precursor of L-lysine and an essential component of the bacterial peptidoglycan. This Caulobacter vibrioides (strain ATCC 19089 / CIP 103742 / CB 15) (Caulobacter crescentus) protein is Diaminopimelate epimerase.